The primary structure comprises 459 residues: UDP-N-acetylmuramoylalanine--D-glutamate ligase (459 aa).

119–125 contributes to the ATP binding site; the sequence is GTNGKTT.

It belongs to the MurCDEF family.

The protein resides in the cytoplasm. The enzyme catalyses UDP-N-acetyl-alpha-D-muramoyl-L-alanine + D-glutamate + ATP = UDP-N-acetyl-alpha-D-muramoyl-L-alanyl-D-glutamate + ADP + phosphate + H(+). It participates in cell wall biogenesis; peptidoglycan biosynthesis. Functionally, cell wall formation. Catalyzes the addition of glutamate to the nucleotide precursor UDP-N-acetylmuramoyl-L-alanine (UMA). In Lacticaseibacillus casei (strain BL23) (Lactobacillus casei), this protein is UDP-N-acetylmuramoylalanine--D-glutamate ligase.